The chain runs to 379 residues: tRNA-specific 2-thiouridylase MnmA (379 aa).

Residues A9–S16 and M35 contribute to the ATP site. Positions N94–D96 are interaction with target base in tRNA. Residue C99 is the Nucleophile of the active site. The cysteines at positions 99 and 195 are disulfide-linked. G123 is a binding site for ATP. The tract at residues K145–Q147 is interaction with tRNA. C195 serves as the catalytic Cysteine persulfide intermediate. Positions R307 to Y308 are interaction with tRNA.

The protein belongs to the MnmA/TRMU family.

The protein resides in the cytoplasm. It catalyses the reaction S-sulfanyl-L-cysteinyl-[protein] + uridine(34) in tRNA + AH2 + ATP = 2-thiouridine(34) in tRNA + L-cysteinyl-[protein] + A + AMP + diphosphate + H(+). Its function is as follows. Catalyzes the 2-thiolation of uridine at the wobble position (U34) of tRNA, leading to the formation of s(2)U34. The chain is tRNA-specific 2-thiouridylase MnmA from Xylella fastidiosa (strain M12).